The chain runs to 218 residues: Sulfite reductase, assimilatory-type (218 aa).

C91, C97, C131, and C135 together coordinate [4Fe-4S] cluster. C135 is a siroheme binding site.

Its function is as follows. This enzyme catalyzes the 6-electron reduction of sulfite to sulfide. This is one of several activities required for the biosynthesis of L-cysteine from sulfate. This is Sulfite reductase, assimilatory-type from Nitratidesulfovibrio vulgaris (strain ATCC 29579 / DSM 644 / CCUG 34227 / NCIMB 8303 / VKM B-1760 / Hildenborough) (Desulfovibrio vulgaris).